A 291-amino-acid polypeptide reads, in one-letter code: Phosphatidylglycerol--prolipoprotein diacylglyceryl transferase (291 aa).

A run of 7 helical transmembrane segments spans residues 21–41 (VSLHWYGLMYLVGFVFAMWLA), 60–80 (LLYAGFLGVFLGGRIGYVLFY), 96–116 (WDGGMSFHGGLIGVILVMIIF), 130–150 (FIAPLIPFGLGAGRLGNFING), 198–218 (SQLYELALEGVVLFLILNLFI), 225–245 (GSVSGLFLIGYGLFRIIVEFF), and 260–280 (ISMGQILSIPMVLAGIIMMVW). Arg143 provides a ligand contact to a 1,2-diacyl-sn-glycero-3-phospho-(1'-sn-glycerol).

This sequence belongs to the Lgt family.

The protein resides in the cell inner membrane. It carries out the reaction L-cysteinyl-[prolipoprotein] + a 1,2-diacyl-sn-glycero-3-phospho-(1'-sn-glycerol) = an S-1,2-diacyl-sn-glyceryl-L-cysteinyl-[prolipoprotein] + sn-glycerol 1-phosphate + H(+). It functions in the pathway protein modification; lipoprotein biosynthesis (diacylglyceryl transfer). In terms of biological role, catalyzes the transfer of the diacylglyceryl group from phosphatidylglycerol to the sulfhydryl group of the N-terminal cysteine of a prolipoprotein, the first step in the formation of mature lipoproteins. This chain is Phosphatidylglycerol--prolipoprotein diacylglyceryl transferase, found in Klebsiella pneumoniae (strain 342).